A 328-amino-acid chain; its full sequence is Nickel import system permease protein NikB (328 aa).

A run of 6 helical transmembrane segments spans residues 11-31, 104-124, 139-159, 170-190, 229-249, and 279-299; these read LMQM…LMKL, LLIS…LGII, VIST…LLFI, ILSQ…AYII, ILPI…GTVV, and VLFI…LTLL. The region spanning 100 to 297 is the ABC transmembrane type-1 domain; it reads APITLLISFS…IINTIADLLT (198 aa).

Belongs to the binding-protein-dependent transport system permease family. OppBC subfamily. The complex is composed of two ATP-binding proteins (NikD and NikE), two transmembrane proteins (NikB and NikC) and a solute-binding protein (NikA).

The protein localises to the cell membrane. Its function is as follows. Part of the ABC transporter complex NikABCDE (Opp2) involved in nickel import. Probably responsible for the translocation of the substrate across the membrane. This chain is Nickel import system permease protein NikB, found in Staphylococcus aureus (strain Mu50 / ATCC 700699).